The sequence spans 129 residues: Small ribosomal subunit protein uS11 (129 aa).

This sequence belongs to the universal ribosomal protein uS11 family. As to quaternary structure, part of the 30S ribosomal subunit. Interacts with proteins S7 and S18. Binds to IF-3.

Functionally, located on the platform of the 30S subunit, it bridges several disparate RNA helices of the 16S rRNA. Forms part of the Shine-Dalgarno cleft in the 70S ribosome. The sequence is that of Small ribosomal subunit protein uS11 from Yersinia enterocolitica serotype O:8 / biotype 1B (strain NCTC 13174 / 8081).